Reading from the N-terminus, the 329-residue chain is COP9 signalosome complex subunit 6 (329 aa).

The region spanning 44-175 (TRVKAQAACS…VTIYESELHV (132 aa)) is the MPN domain.

Belongs to the peptidase M67A family. CSN6 subfamily. As to quaternary structure, component of the CSN complex, probably composed of CSN1, CSN2, CSN3, CSN4, CSN5, CSN6, CSN7 and CSN8.

In terms of biological role, component of the COP9 signalosome complex (CSN), a complex involved in various cellular and developmental processes such as photomorphogenesis and response to hormones. The CSN complex is an essential regulator of the ubiquitin (Ubl) conjugation pathway by mediating the deneddylation of the cullin subunits of SCF-type E3 ligase complexes, leading to decrease the Ubl ligase activity of SCF. Involved in early response to iron deficiency. The protein is COP9 signalosome complex subunit 6 of Oryza sativa subsp. japonica (Rice).